Reading from the N-terminus, the 24-residue chain is Outer membrane protein (24 aa).

The protein belongs to the Gram-negative porin family. As to quaternary structure, homotrimer.

Its subcellular location is the cell outer membrane. In terms of biological role, forms pores that allow passive diffusion of small molecules across the outer membrane. The chain is Outer membrane protein from Sodalis glossinidius.